Here is an 899-residue protein sequence, read N- to C-terminus: CNK3/IPCEF1 fusion protein (899 aa).

The SAM domain occupies 7-72 (WSPKQVVDWT…LEAVDLLCAL (66 aa)). Residues 80–174 (NMKNLVLKLR…TTVQKDCFVA (95 aa)) enclose the CRIC domain. The PDZ domain occupies 211–293 (EVHLPNIKPG…GVVLLLKKRP (83 aa)). 2 disordered regions span residues 309–334 (WKPPLVQTSPPPATTQSPESTMDTSL) and 347–390 (PPPP…FLDQ). Positions 332–457 (TSLKKEKSAI…ARPRGHGRKA (126 aa)) constitute a DUF1170 domain. Phosphoserine is present on serine 383. The PH domain occupies 503–602 (HADCQGWLYK…WLNKLGSAVI (100 aa)). Disordered stretches follow at residues 605–687 (ESTT…PDTV), 735–770 (LSSDDTSSLSSNHDHLTVPDKPAGSKIMDKEETKVS), and 868–899 (QQQRASPAPDDTDDTPQELKKSPSSPSVENSI). A compositionally biased stretch (acidic residues) spans 613–624 (CYSESEQEDPEI). Low complexity predominate over residues 634-662 (ASQTQSLTAQQASSSSPSLSGTSYSFSSL). The segment covering 663 to 676 (ENTVKTPSSFPSSL) has biased composition (polar residues). Over residues 735–745 (LSSDDTSSLSS) the composition is skewed to low complexity. Over residues 761-770 (IMDKEETKVS) the composition is skewed to basic and acidic residues. Residues 851-899 (KYREWKVMNTLLIQDIYQQQRASPAPDDTDDTPQELKKSPSSPSVENSI) are required for interaction with CYTH2. Serine 873 is subject to Phosphoserine. Residues 889 to 899 (SPSSPSVENSI) are compositionally biased toward polar residues.

Belongs to the CNKSR family.

Functionally, required for hepatocyte growth factor (HGF)-dependent activation of Arf6 and HGF-stimulated cell migration. This is CNK3/IPCEF1 fusion protein (CNK3/IPCEF1) from Homo sapiens (Human).